The following is a 507-amino-acid chain: Glycerol kinase 1 (507 aa).

Thr12 serves as a coordination point for ADP. Residues Thr12, Thr13, and Ser14 each contribute to the ATP site. Residue Thr12 coordinates sn-glycerol 3-phosphate. Arg16 contacts ADP. The sn-glycerol 3-phosphate site is built by Arg82, Glu83, Tyr134, and Asp249. 5 residues coordinate glycerol: Arg82, Glu83, Tyr134, Asp249, and Gln250. 2 residues coordinate ADP: Thr271 and Gly315. ATP-binding residues include Thr271, Gly315, Gln319, and Gly416. ADP is bound by residues Gly416 and Asn420.

It belongs to the FGGY kinase family.

The enzyme catalyses glycerol + ATP = sn-glycerol 3-phosphate + ADP + H(+). It functions in the pathway polyol metabolism; glycerol degradation via glycerol kinase pathway; sn-glycerol 3-phosphate from glycerol: step 1/1. Its activity is regulated as follows. Inhibited by fructose 1,6-bisphosphate (FBP). Functionally, key enzyme in the regulation of glycerol uptake and metabolism. Catalyzes the phosphorylation of glycerol to yield sn-glycerol 3-phosphate. The polypeptide is Glycerol kinase 1 (Streptomyces coelicolor (strain ATCC BAA-471 / A3(2) / M145)).